Reading from the N-terminus, the 479-residue chain is Catalase easC (479 aa).

Over residues 1-13 (MASQVSLTAQGSG) the composition is skewed to polar residues. The segment at 1 to 28 (MASQVSLTAQGSGLSAPLNGPEHLTSTT) is disordered. The active site involves His53. Residue Tyr343 participates in heme binding. The segment at 365–385 (HAANDAPKTKKPAVPLQKQSR) is disordered.

Belongs to the catalase family. It depends on heme as a cofactor.

Its pathway is alkaloid biosynthesis; ergot alkaloid biosynthesis. Catalase; part of the gene cluster that mediates the biosynthesis of fungal ergot alkaloid. DmaW catalyzes the first step of ergot alkaloid biosynthesis by condensing dimethylallyl diphosphate (DMAP) and tryptophan to form 4-dimethylallyl-L-tryptophan. The second step is catalyzed by the methyltransferase easF that methylates 4-dimethylallyl-L-tryptophan in the presence of S-adenosyl-L-methionine, resulting in the formation of 4-dimethylallyl-L-abrine. The catalase easC and the FAD-dependent oxidoreductase easE then transform 4-dimethylallyl-L-abrine to chanoclavine-I which is further oxidized by easD in the presence of NAD(+), resulting in the formation of chanoclavine-I aldehyde. Agroclavine dehydrogenase easG then mediates the conversion of chanoclavine-I aldehyde to agroclavine via a non-enzymatic adduct reaction: the substrate is an iminium intermediate that is formed spontaneously from chanoclavine-I aldehyde in the presence of glutathione. Further conversion of agroclavine to paspalic acid is a two-step process involving oxidation of agroclavine to elymoclavine and of elymoclavine to paspalic acid, the second step being performed by the elymoclavine oxidase cloA. However, cloA does not encode a functional enzyme indicating that C.fusiformis terminates its ergot alkaloid pathway at elymoclavine. The polypeptide is Catalase easC (Claviceps fusiformis (Ergot fungus)).